The chain runs to 512 residues: Cytokinin hydroxylase (512 aa).

The chain crosses the membrane as a helical span at residues 2–22 (MVTLVLKYVLVIVMTLILRVL). Cys-458 is a heme binding site.

It belongs to the cytochrome P450 family. Requires heme as cofactor. In terms of tissue distribution, specifically expressed in roots.

It is found in the membrane. It catalyses the reaction N(6)-(dimethylallyl)adenosine 5'-phosphate + NADPH + O2 + H(+) = 9-ribosyl-trans-zeatin 5'-phosphate + NADP(+) + H2O. The catalysed reaction is N(6)-(dimethylallyl)adenosine 5'-diphosphate + NADPH + O2 + H(+) = 9-ribosyl-trans-zeatin 5'-diphosphate + NADP(+) + H2O. It carries out the reaction N(6)-(dimethylallyl)adenosine 5'-triphosphate + NADPH + O2 + H(+) = 9-ribosyl-trans-zeatin 5'-triphosphate + NADP(+) + H2O. In terms of biological role, cytokinin hydroxylase that catalyzes the biosynthesis of trans-zeatin via the isopentenyladenine riboside 5'-monophosphate (iPRMP)-dependent pathway. Can use isopentenyladenosine-5'-monophosphate, isopentenyladenosine-5'-diphosphate and isopentenyladenosine-5'-triphosphate as substrate. The polypeptide is Cytokinin hydroxylase (CYP735A2) (Arabidopsis thaliana (Mouse-ear cress)).